Here is a 261-residue protein sequence, read N- to C-terminus: Methyl jasmonate esterase 1 (261 aa).

An AB hydrolase-1 domain is found at 8–251 (FVLVHGACHG…MFSKPLDLCA (244 aa)). Catalysis depends on Ser-82, which acts as the Acyl-ester intermediate. Active-site charge relay system residues include Asp-211 and His-239.

It belongs to the AB hydrolase superfamily. Methylesterase family. As to quaternary structure, homodimer.

The enzyme catalyses methyl (-)-jasmonate + H2O = jasmonate + methanol + H(+). The catalysed reaction is methyl salicylate + H2O = salicylate + methanol + H(+). The protein operates within plant hormone biosynthesis. It participates in lipid metabolism; oxylipin biosynthesis. Functionally, methylesterase that catalyzes the hydrolysis of methyl jasmonate (MeJA) into jasmonate (JA). Can also use methyl salicylate (MeSA) as substrate with a lower efficiency. The polypeptide is Methyl jasmonate esterase 1 (Vitis vinifera (Grape)).